A 308-amino-acid chain; its full sequence is Ribosomal RNA small subunit methyltransferase H (308 aa).

S-adenosyl-L-methionine contacts are provided by residues glycine 32–histidine 34, aspartate 52, phenylalanine 78, aspartate 100, and glutamine 107.

This sequence belongs to the methyltransferase superfamily. RsmH family.

The protein localises to the cytoplasm. The enzyme catalyses cytidine(1402) in 16S rRNA + S-adenosyl-L-methionine = N(4)-methylcytidine(1402) in 16S rRNA + S-adenosyl-L-homocysteine + H(+). Functionally, specifically methylates the N4 position of cytidine in position 1402 (C1402) of 16S rRNA. This is Ribosomal RNA small subunit methyltransferase H from Legionella pneumophila (strain Corby).